The sequence spans 432 residues: uncharacterized protein (432 aa).

Positions 1–18 (MAIGDKRKKNRKNKQNKK) are enriched in basic residues. 3 disordered regions span residues 1 to 23 (MAIGDKRKKNRKNKQNKKNKNDN), 37 to 56 (NSNSLVNSNNKNNNNKNGNG), and 122 to 168 (STNS…GSSL). 3 stretches are compositionally biased toward low complexity: residues 37-53 (NSNSLVNSNNKNNNNKN), 122-147 (STNSNNNNNSTNGNSNSPSIIIQQQQ), and 154-168 (ESQSSNNNNNNGSSL). The stretch at 181–226 (LNDQLKIVQLEQKIVNLEKEIQRMRNEQNQIHKQNLNQYHELLKQI) forms a coiled coil. Disordered stretches follow at residues 270 to 290 (VQPVSTPSSSSNSLASKKSNG) and 310 to 432 (SSKF…STLR). Over residues 274-288 (STPSSSSNSLASKKS) the composition is skewed to low complexity. Positions 311–324 (SKFAQSNSSPSRVN) are enriched in polar residues. Residues 352–378 (KKSATTTTTSSSSNNATTTTAKGSTST) show a composition bias toward low complexity. Residues 383 to 414 (ITNSNNIKNSVLSPKSITKPNTPSNIIFSPLS) are compositionally biased toward polar residues.

This is an uncharacterized protein from Dictyostelium discoideum (Social amoeba).